The primary structure comprises 122 residues: Ribosome-binding factor A (122 aa).

Belongs to the RbfA family. Monomer. Binds 30S ribosomal subunits, but not 50S ribosomal subunits or 70S ribosomes.

The protein localises to the cytoplasm. Its function is as follows. One of several proteins that assist in the late maturation steps of the functional core of the 30S ribosomal subunit. Associates with free 30S ribosomal subunits (but not with 30S subunits that are part of 70S ribosomes or polysomes). Required for efficient processing of 16S rRNA. May interact with the 5'-terminal helix region of 16S rRNA. In Anaeromyxobacter sp. (strain Fw109-5), this protein is Ribosome-binding factor A.